The sequence spans 105 residues: Mini zinc finger protein 1 (105 aa).

The interval 1-29 is disordered; that stretch reads MGPQQDRSAAKPYANGSTAAAAAAGRKEN. The ZF-HD dimerization-type; degenerate zinc finger occupies 35–84; that stretch reads YRECQRNHAASIGGHAVDGCREFMASGAEGTAAALLCAACGCHRSFHRRE.

In terms of assembly, homo- and heterodimers.

It localises to the cytoplasm. In terms of biological role, inhibits zinc finger homeodomain (ZHD) transcription factors, by interacting with them to prevent both their nuclear localization and their DNA-binding properties. This Oryza sativa subsp. indica (Rice) protein is Mini zinc finger protein 1 (MIF1).